We begin with the raw amino-acid sequence, 111 residues long: Large ribosomal subunit protein uL22 (111 aa).

The protein belongs to the universal ribosomal protein uL22 family. Part of the 50S ribosomal subunit.

In terms of biological role, this protein binds specifically to 23S rRNA; its binding is stimulated by other ribosomal proteins, e.g. L4, L17, and L20. It is important during the early stages of 50S assembly. It makes multiple contacts with different domains of the 23S rRNA in the assembled 50S subunit and ribosome. The globular domain of the protein is located near the polypeptide exit tunnel on the outside of the subunit, while an extended beta-hairpin is found that lines the wall of the exit tunnel in the center of the 70S ribosome. In Acidithiobacillus ferrooxidans (strain ATCC 23270 / DSM 14882 / CIP 104768 / NCIMB 8455) (Ferrobacillus ferrooxidans (strain ATCC 23270)), this protein is Large ribosomal subunit protein uL22.